Reading from the N-terminus, the 520-residue chain is GMP synthase [glutamine-hydrolyzing] (520 aa).

A Glutamine amidotransferase type-1 domain is found at 12-205 (KIIVLDYGSQ…AISICGARGD (194 aa)). Cys89 functions as the Nucleophile in the catalytic mechanism. Active-site residues include His179 and Glu181. Positions 206-395 (WSMDNFIDME…LGMPEEIVWR (190 aa)) constitute a GMPS ATP-PPase domain. 233 to 239 (SGGVDSS) lines the ATP pocket.

Homodimer.

It carries out the reaction XMP + L-glutamine + ATP + H2O = GMP + L-glutamate + AMP + diphosphate + 2 H(+). It participates in purine metabolism; GMP biosynthesis; GMP from XMP (L-Gln route): step 1/1. Functionally, catalyzes the synthesis of GMP from XMP. This is GMP synthase [glutamine-hydrolyzing] from Streptococcus pyogenes serotype M5 (strain Manfredo).